The primary structure comprises 667 residues: Threonine--tRNA ligase (667 aa).

Residues 3-64 form the TGS domain; that stretch reads DMIRVTLPDG…EEDTNLALVT (62 aa). The catalytic stretch occupies residues 252–561; that stretch reads DHRRLGQEMD…LIEHFVGRFP (310 aa). C357, H408, and H538 together coordinate Zn(2+).

The protein belongs to the class-II aminoacyl-tRNA synthetase family. As to quaternary structure, homodimer. It depends on Zn(2+) as a cofactor.

Its subcellular location is the cytoplasm. The enzyme catalyses tRNA(Thr) + L-threonine + ATP = L-threonyl-tRNA(Thr) + AMP + diphosphate + H(+). Its function is as follows. Catalyzes the attachment of threonine to tRNA(Thr) in a two-step reaction: L-threonine is first activated by ATP to form Thr-AMP and then transferred to the acceptor end of tRNA(Thr). Also edits incorrectly charged L-seryl-tRNA(Thr). The protein is Threonine--tRNA ligase of Sphingopyxis alaskensis (strain DSM 13593 / LMG 18877 / RB2256) (Sphingomonas alaskensis).